The sequence spans 291 residues: DNA repair protein RecO (291 aa).

This sequence belongs to the RecO family.

Involved in DNA repair and RecF pathway recombination. The chain is DNA repair protein RecO from Cupriavidus pinatubonensis (strain JMP 134 / LMG 1197) (Cupriavidus necator (strain JMP 134)).